The primary structure comprises 112 residues: Large ribosomal subunit protein P2-B (112 aa).

The tract at residues 89–112 (APAAADAKKEEEEEDDDMGFGLFD) is disordered.

Belongs to the eukaryotic ribosomal protein P1/P2 family. In terms of assembly, P1 and P2 exist as dimers at the large ribosomal subunit. In terms of processing, phosphorylated.

Functionally, plays an important role in the elongation step of protein synthesis. This Trypanosoma cruzi protein is Large ribosomal subunit protein P2-B.